We begin with the raw amino-acid sequence, 498 residues long: ATP synthase subunit beta, chloroplastic (498 aa).

Residue 172 to 179 coordinates ATP; that stretch reads GGAGVGKT.

Belongs to the ATPase alpha/beta chains family. F-type ATPases have 2 components, CF(1) - the catalytic core - and CF(0) - the membrane proton channel. CF(1) has five subunits: alpha(3), beta(3), gamma(1), delta(1), epsilon(1). CF(0) has four main subunits: a(1), b(1), b'(1) and c(9-12).

The protein localises to the plastid. It localises to the chloroplast thylakoid membrane. It carries out the reaction ATP + H2O + 4 H(+)(in) = ADP + phosphate + 5 H(+)(out). In terms of biological role, produces ATP from ADP in the presence of a proton gradient across the membrane. The catalytic sites are hosted primarily by the beta subunits. This is ATP synthase subunit beta, chloroplastic from Liriodendron tulipifera (Tuliptree).